Reading from the N-terminus, the 381-residue chain is Penicillin-binding protein 4 (381 aa).

Residue S60 is the Acyl-ester intermediate of the active site. The chain crosses the membrane as a helical span at residues 271–291 (VAGCLDTWSFMATGWGHGWAL). 299 to 308 (GYGHDGASGG) is a binding site for NAD(+). A helical transmembrane segment spans residues 315–340 (VVPGSGVVAALLTNGGVATSFFTDLF).

It belongs to the beta-lactamase family.

Its subcellular location is the cell membrane. Involved in cell wall biosynthesis and may also act as a sensor of external penicillins. The protein is Penicillin-binding protein 4 (pbp) of Amycolatopsis lactamdurans (Nocardia lactamdurans).